Reading from the N-terminus, the 465-residue chain is ATP synthase subunit beta (465 aa).

149–156 contacts ATP; that stretch reads GGAGVGKT.

The protein belongs to the ATPase alpha/beta chains family. F-type ATPases have 2 components, CF(1) - the catalytic core - and CF(0) - the membrane proton channel. CF(1) has five subunits: alpha(3), beta(3), gamma(1), delta(1), epsilon(1). CF(0) has three main subunits: a(1), b(2) and c(9-12). The alpha and beta chains form an alternating ring which encloses part of the gamma chain. CF(1) is attached to CF(0) by a central stalk formed by the gamma and epsilon chains, while a peripheral stalk is formed by the delta and b chains.

The protein localises to the cell inner membrane. The catalysed reaction is ATP + H2O + 4 H(+)(in) = ADP + phosphate + 5 H(+)(out). Produces ATP from ADP in the presence of a proton gradient across the membrane. The catalytic sites are hosted primarily by the beta subunits. This is ATP synthase subunit beta from Dictyoglomus turgidum (strain DSM 6724 / Z-1310).